Here is a 237-residue protein sequence, read N- to C-terminus: Insulin-like growth factor-binding protein 6 (237 aa).

The signal sequence occupies residues 1–25; that stretch reads MTPHRLLPPLLLTLLLAARPGGALA. The 80-residue stretch at 26–105 folds into the IGFBP N-terminal domain; it reads RCPGCGQGVS…LQGRGRCGRA (80 aa). Intrachain disulfides connect Cys-27/Cys-30, Cys-38/Cys-42, Cys-55/Cys-61, Cys-69/Cys-82, and Cys-76/Cys-102. Residues 101 to 158 are disordered; sequence RCGRARTPSGENPKESKPQAGTARSQDVNRRDQQRNSGTSTTPSRSNSGGVQDTEMGP. Positions 135-151 are enriched in polar residues; that stretch reads RNSGTSTTPSRSNSGGV. One can recognise a Thyroglobulin type-1 domain in the interval 156–231; it reads MGPCRKHLDS…SEGGDGSSLC (76 aa). 3 disulfide bridges follow: Cys-159/Cys-186, Cys-197/Cys-208, and Cys-210/Cys-231. Residues 215–237 form a disordered region; that stretch reads GQPLPGSSEGGDGSSLCPTGSSG.

As to quaternary structure, interacts (via C-terminal domain) with PHB2. Post-translationally, O-glycosylated.

Its subcellular location is the secreted. IGF-binding proteins prolong the half-life of the IGFs and have been shown to either inhibit or stimulate the growth promoting effects of the IGFs on cell culture. They alter the interaction of IGFs with their cell surface receptors. Activates the MAPK signaling pathway and induces cell migration. This chain is Insulin-like growth factor-binding protein 6 (IGFBP6), found in Bos taurus (Bovine).